The chain runs to 316 residues: Pantothenate kinase (316 aa).

An ATP-binding site is contributed by Gly-95–Ser-102.

Belongs to the prokaryotic pantothenate kinase family.

The protein localises to the cytoplasm. It carries out the reaction (R)-pantothenate + ATP = (R)-4'-phosphopantothenate + ADP + H(+). The protein operates within cofactor biosynthesis; coenzyme A biosynthesis; CoA from (R)-pantothenate: step 1/5. In Photorhabdus laumondii subsp. laumondii (strain DSM 15139 / CIP 105565 / TT01) (Photorhabdus luminescens subsp. laumondii), this protein is Pantothenate kinase.